The sequence spans 456 residues: UPF0496 protein 4 (456 aa).

The helical transmembrane segment at Val-195–Val-217 threads the bilayer. The disordered stretch occupies residues Gln-368–Thr-390. Over residues Asn-371 to Glu-381 the composition is skewed to polar residues.

The protein belongs to the ROH1 family.

The protein resides in the membrane. This Oryza sativa subsp. japonica (Rice) protein is UPF0496 protein 4.